The following is a 128-amino-acid chain: Ribosome-binding factor A (128 aa).

Belongs to the RbfA family. In terms of assembly, monomer. Binds 30S ribosomal subunits, but not 50S ribosomal subunits or 70S ribosomes.

It localises to the cytoplasm. In terms of biological role, one of several proteins that assist in the late maturation steps of the functional core of the 30S ribosomal subunit. Associates with free 30S ribosomal subunits (but not with 30S subunits that are part of 70S ribosomes or polysomes). Required for efficient processing of 16S rRNA. May interact with the 5'-terminal helix region of 16S rRNA. This Saccharophagus degradans (strain 2-40 / ATCC 43961 / DSM 17024) protein is Ribosome-binding factor A.